The chain runs to 389 residues: Large envelope protein (389 aa).

Methionine 1 is subject to N-acetylmethionine. Glycine 2 is lipidated: N-myristoyl glycine; by host. The interval 2-108 (GQNLSVSNPL…PPLRDTHPQA (107 aa)) is pre-S1. Residues 2 to 163 (GQNLSVSNPL…FSRTGDPAPN (162 aa)) are pre-S. The Virion surface; in external conformation segment spans residues 2 to 170 (GQNLSVSNPL…APNMENITSG (169 aa)). The Intravirion; in internal conformation segment spans residues 2-242 (GQNLSVSNPL…PGYRWMCLRR (241 aa)). The tract at residues 79 to 99 (ALPPPAATNRQSGRQPTPISP) is disordered. The tract at residues 109-163 (MKWNSTVFHQTLQDPRVRGLYFPVGGSSSGTVNPVPTTASHISSIFSRTGDPAPN) is pre-S2. Residues 171–191 (FLGPLLVLQAGFFLLTKILTI) traverse the membrane as a helical segment. The Intravirion; in external conformation segment spans residues 192-242 (PQSLDSWWTSLNFLGGAPVCPGQNSQSPTSNHSPTSCPPICPGYRWMCLRR). The helical transmembrane segment at 243 to 263 (FIIFLFILLLCLIFLLVLLDY) threads the bilayer. The Virion surface portion of the chain corresponds to 264-337 (QGMLPVCPLL…WASVRFSWLS (74 aa)). A glycan (N-linked (GlcNAc...) asparagine; by host) is linked at asparagine 309. The helical transmembrane segment at 338–358 (LLAPFVQWFAGLSPTAWLLVI) threads the bilayer. The Intravirion segment spans residues 359–364 (WMIWYW). A helical transmembrane segment spans residues 365–387 (GPNLYNILNPFIPLLPIFFCLWV). The Virion surface segment spans residues 388–389 (YI).

It belongs to the orthohepadnavirus major surface antigen family. In terms of assembly, in its internal form (Li-HBsAg), interacts with the capsid protein and with the isoform S. Interacts with host chaperone CANX. As to quaternary structure, associates with host chaperone CANX through its pre-S2 N glycan; this association may be essential for isoform M proper secretion. Interacts with isoform L. Interacts with the antigens of satellite virus HDV (HDVAgs); this interaction is required for encapsidation of HDV genomic RNA. In terms of processing, isoform M is N-terminally acetylated by host at a ratio of 90%, and N-glycosylated by host at the pre-S2 region. Post-translationally, myristoylated.

Its subcellular location is the virion membrane. Functionally, the large envelope protein exists in two topological conformations, one which is termed 'external' or Le-HBsAg and the other 'internal' or Li-HBsAg. In its external conformation the protein attaches the virus to cell receptors and thereby initiating infection. This interaction determines the species specificity and liver tropism. This attachment induces virion internalization predominantly through caveolin-mediated endocytosis. The large envelope protein also assures fusion between virion membrane and endosomal membrane. In its internal conformation the protein plays a role in virion morphogenesis and mediates the contact with the nucleocapsid like a matrix protein. In terms of biological role, the middle envelope protein plays an important role in the budding of the virion. It is involved in the induction of budding in a nucleocapsid independent way. In this process the majority of envelope proteins bud to form subviral lipoprotein particles of 22 nm of diameter that do not contain a nucleocapsid. The protein is Large envelope protein of Hylobatidae (gibbons).